We begin with the raw amino-acid sequence, 1040 residues long: Multidrug resistance protein MdtB (1040 aa).

A run of 11 helical transmembrane segments spans residues 15-37 (LFILRPVATTLLMIAILLAGIIG), 343-365 (VQFELLLAIALVVMVIYLFLRNA), 369-391 (LIPSIAVPLSLVGTFAAMYFLGF), 398-420 (LMALTIATGFVVDDAIVVIENIA), 440-462 (IGFTIISLTFSLIAVLIPLLFMG), 474-496 (VTLAVSILISAVVSLTLTPMMCA), 535-557 (HPWLTLSVALGTLLLTILLYIWI), 867-889 (VWLIVAAIVAMYIVLGVLYESFI), 909-931 (LMMAGKDLDVIAIIGIILLIGIV), 968-990 (ILMTTMAALLSALPLMLSTGVGA), and 1000-1022 (MVGGLIMSQILTLFTTPVIYLLF).

Belongs to the resistance-nodulation-cell division (RND) (TC 2.A.6) family. MdtB subfamily. Part of a tripartite efflux system composed of MdtA, MdtB and MdtC. MdtB forms a heteromultimer with MdtC.

It localises to the cell inner membrane. This chain is Multidrug resistance protein MdtB, found in Pectobacterium atrosepticum (strain SCRI 1043 / ATCC BAA-672) (Erwinia carotovora subsp. atroseptica).